A 141-amino-acid polypeptide reads, in one-letter code: MKVRTQMMYDMETLLRKVFKQIRNEINEILDKELSRNEFTILRILSEQGPKKVTEFAPILEVSASHITAVTDALVEKEWITRIRSKEDRRIIRIHITEAGEKVLQHFNEKKTEYFFKRFDCYTDAELATLIELFSKLDKKR.

Residues 4-139 form the HTH marR-type domain; that stretch reads RTQMMYDMET…LIELFSKLDK (136 aa). Residues 53–76 constitute a DNA-binding region (H-T-H motif); sequence VTEFAPILEVSASHITAVTDALVE.

This is an uncharacterized protein from Bacillus subtilis (strain 168).